Here is a 399-residue protein sequence, read N- to C-terminus: MAEAAAPLFDTFARAPLRFERGEGVWLFTESGERYLDFAAGVAVNSLGHAHPHLVEAIKTQAEKVWHVSNLYEVPGQEKLAKRLTEATFADKVFFTNSGAEALECAIKTARRYHYSKGHPEKFRIITFEGAFHGRTLATIAAGGQQKYLEGFGPKVEGFDQVPFGDVDALKAAITAETAALLIEPIQGEGGIRAPAKEFLQLLRSLCDEHDLLLIFDEVQTGVGRTGKFFAYEQTGVAPDIMAVAKGIGGGFPLGACLATADAASGMTAGVHGTTYGGNPLAMAVGNAVLDVVLADGFLEKVRDVALVFRQGLASLKDRYPDVIEEIRGEGLLLGIKARVPSGELLQAMRAEHLLGVPAGDNVIRLLPPLVTTAEEAREGLARVEAAAASLTAKQAKIA.

Residues 99–100 (GA) and phenylalanine 132 contribute to the pyridoxal 5'-phosphate site. Arginine 135 contributes to the N(2)-acetyl-L-ornithine binding site. Residue 217–220 (DEVQ) participates in pyridoxal 5'-phosphate binding. An N6-(pyridoxal phosphate)lysine modification is found at lysine 246. A N(2)-acetyl-L-ornithine-binding site is contributed by threonine 274. Pyridoxal 5'-phosphate is bound at residue threonine 275.

It belongs to the class-III pyridoxal-phosphate-dependent aminotransferase family. ArgD subfamily. As to quaternary structure, homodimer. Requires pyridoxal 5'-phosphate as cofactor.

The protein resides in the cytoplasm. The catalysed reaction is N(2)-acetyl-L-ornithine + 2-oxoglutarate = N-acetyl-L-glutamate 5-semialdehyde + L-glutamate. It participates in amino-acid biosynthesis; L-arginine biosynthesis; N(2)-acetyl-L-ornithine from L-glutamate: step 4/4. The polypeptide is Acetylornithine aminotransferase (Agrobacterium fabrum (strain C58 / ATCC 33970) (Agrobacterium tumefaciens (strain C58))).